The chain runs to 146 residues: Small ribosomal subunit protein bS6 (146 aa).

A disordered region spans residues 106-146; the sequence is QAAATQRAAERRAQREAERNAAQAQSSASNQARTAATTSGK. The segment covering 113-124 has biased composition (basic and acidic residues); sequence AAERRAQREAER. A compositionally biased stretch (low complexity) spans 125-146; sequence NAAQAQSSASNQARTAATTSGK.

The protein belongs to the bacterial ribosomal protein bS6 family.

Functionally, binds together with bS18 to 16S ribosomal RNA. The chain is Small ribosomal subunit protein bS6 from Oenococcus oeni (strain ATCC BAA-331 / PSU-1).